The primary structure comprises 505 residues: RNA-splicing ligase RtcB homolog (505 aa).

Positions 119, 122, 227, and 259 each coordinate Mn(2+). Asparagine 226–glutamate 230 is a GMP binding site. Serine 300 is subject to Phosphoserine. Residue histidine 353 coordinates Mn(2+). GMP contacts are provided by residues histidine 353 to asparagine 354, glycine 402 to methionine 405, serine 409, and histidine 428 to glycine 431. The active-site GMP-histidine intermediate is the histidine 428. Residue lysine 496 forms a Glycyl lysine isopeptide (Lys-Gly) (interchain with G-Cter in SUMO2) linkage. Lysine 504 serves as a coordination point for GMP.

The protein belongs to the RtcB family. In terms of assembly, catalytic component of the tRNA-splicing ligase complex. Requires Mn(2+) as cofactor.

The protein localises to the nucleus. The protein resides in the cytoplasm. The catalysed reaction is a 3'-end 3'-phospho-ribonucleotide-RNA + a 5'-end dephospho-ribonucleoside-RNA + GTP = a ribonucleotidyl-ribonucleotide-RNA + GMP + diphosphate. It carries out the reaction a 3'-end 2',3'-cyclophospho-ribonucleotide-RNA + a 5'-end dephospho-ribonucleoside-RNA + GTP + H2O = a ribonucleotidyl-ribonucleotide-RNA + GMP + diphosphate + H(+). Its activity is regulated as follows. Protein archease stimulates the activity of the tRNA ligase complex with high efficiency in the presence of GTP. Its function is as follows. Catalytic subunit of the tRNA-splicing ligase complex that acts by directly joining spliced tRNA halves to mature-sized tRNAs by incorporating the precursor-derived splice junction phosphate into the mature tRNA as a canonical 3',5'-phosphodiester. May act as an RNA ligase with broad substrate specificity, and may function toward other RNAs. In Homo sapiens (Human), this protein is RNA-splicing ligase RtcB homolog.